The primary structure comprises 130 residues: MKSLGRHLVAEFYECDKEVLDNVQLIEQEMKQAAYESGATIVTSTFHRFLPYGVSGVVVISESHLTIHTWPEYGYAAIDLFTCGEDVDPWKAFEHLKKALKAKRVHVVEHERGRYDEIGIPEDSPHKVTV.

The active-site Schiff-base intermediate with substrate; via pyruvic acid is S63. S63 carries the pyruvic acid (Ser); by autocatalysis modification. The active-site Proton acceptor; for processing activity is H68. C83 acts as the Proton donor; for catalytic activity in catalysis.

The protein belongs to the prokaryotic AdoMetDC family. Type 1 subfamily. As to quaternary structure, heterotetramer of two alpha and two beta chains arranged as a dimer of alpha/beta heterodimers. The cofactor is pyruvate. In terms of processing, is synthesized initially as an inactive proenzyme. Formation of the active enzyme involves a self-maturation process in which the active site pyruvoyl group is generated from an internal serine residue via an autocatalytic post-translational modification. Two non-identical subunits are generated from the proenzyme in this reaction, and the pyruvate is formed at the N-terminus of the alpha chain, which is derived from the carboxyl end of the proenzyme. The post-translation cleavage follows an unusual pathway, termed non-hydrolytic serinolysis, in which the side chain hydroxyl group of the serine supplies its oxygen atom to form the C-terminus of the beta chain, while the remainder of the serine residue undergoes an oxidative deamination to produce ammonia and the pyruvoyl group blocking the N-terminus of the alpha chain.

It catalyses the reaction S-adenosyl-L-methionine + H(+) = S-adenosyl 3-(methylsulfanyl)propylamine + CO2. Its pathway is amine and polyamine biosynthesis; S-adenosylmethioninamine biosynthesis; S-adenosylmethioninamine from S-adenosyl-L-methionine: step 1/1. In terms of biological role, catalyzes the decarboxylation of S-adenosylmethionine to S-adenosylmethioninamine (dcAdoMet), the propylamine donor required for the synthesis of the polyamines spermine and spermidine from the diamine putrescine. The chain is S-adenosylmethionine decarboxylase proenzyme from Thermotoga petrophila (strain ATCC BAA-488 / DSM 13995 / JCM 10881 / RKU-1).